The following is a 456-amino-acid chain: tRNA-2-methylthio-N(6)-dimethylallyladenosine synthase (456 aa).

The region spanning 19–136 is the MTTase N-terminal domain; sequence LTFNVQTFGC…LAELIYARHT (118 aa). C28, C63, C97, C173, C177, and C180 together coordinate [4Fe-4S] cluster. The region spanning 159 to 389 is the Radical SAM core domain; that stretch reads QKYKFKAGVN…LTTIRESSSK (231 aa). The 64-residue stretch at 392–455 folds into the TRAM domain; that stretch reads KDDEGKIAEV…GFYYMGEMME (64 aa).

It belongs to the methylthiotransferase family. MiaB subfamily. Monomer. [4Fe-4S] cluster is required as a cofactor.

Its subcellular location is the cytoplasm. It catalyses the reaction N(6)-dimethylallyladenosine(37) in tRNA + (sulfur carrier)-SH + AH2 + 2 S-adenosyl-L-methionine = 2-methylsulfanyl-N(6)-dimethylallyladenosine(37) in tRNA + (sulfur carrier)-H + 5'-deoxyadenosine + L-methionine + A + S-adenosyl-L-homocysteine + 2 H(+). Its function is as follows. Catalyzes the methylthiolation of N6-(dimethylallyl)adenosine (i(6)A), leading to the formation of 2-methylthio-N6-(dimethylallyl)adenosine (ms(2)i(6)A) at position 37 in tRNAs that read codons beginning with uridine. The sequence is that of tRNA-2-methylthio-N(6)-dimethylallyladenosine synthase from Lachnoclostridium phytofermentans (strain ATCC 700394 / DSM 18823 / ISDg) (Clostridium phytofermentans).